The chain runs to 280 residues: 4-diphosphocytidyl-2-C-methyl-D-erythritol kinase (280 aa).

The active site involves Lys-8. Position 91 to 101 (91 to 101) interacts with ATP; sequence PVAAGLAGGST. The active site involves Asp-133.

The protein belongs to the GHMP kinase family. IspE subfamily.

It catalyses the reaction 4-CDP-2-C-methyl-D-erythritol + ATP = 4-CDP-2-C-methyl-D-erythritol 2-phosphate + ADP + H(+). The protein operates within isoprenoid biosynthesis; isopentenyl diphosphate biosynthesis via DXP pathway; isopentenyl diphosphate from 1-deoxy-D-xylulose 5-phosphate: step 3/6. Functionally, catalyzes the phosphorylation of the position 2 hydroxy group of 4-diphosphocytidyl-2C-methyl-D-erythritol. The chain is 4-diphosphocytidyl-2-C-methyl-D-erythritol kinase from Clostridium botulinum (strain 657 / Type Ba4).